Reading from the N-terminus, the 259-residue chain is HTH-type quorum sensing-dependent transcriptional regulator VjbR (259 aa).

The interval lysine 76–glycine 179 is C12-HSL binding. The HTH luxR-type domain maps to alanine 183–glycine 248. A DNA-binding region (H-T-H motif) is located at residues aspartate 207 to glutamine 226.

Functionally, transcriptional regulator involved in the global control of Brucella gene expression. Mediates the effects of the quorum sensing autoinducer C12-HSL (N-dodecanoyl-homoserine lactone) on a large and diverse number of genes. The chain is HTH-type quorum sensing-dependent transcriptional regulator VjbR (vjbR) from Brucella ovis (strain ATCC 25840 / 63/290 / NCTC 10512).